The following is a 235-amino-acid chain: Large ribosomal subunit protein uL1 (235 aa).

Belongs to the universal ribosomal protein uL1 family. Part of the 50S ribosomal subunit.

Its function is as follows. Binds directly to 23S rRNA. The L1 stalk is quite mobile in the ribosome, and is involved in E site tRNA release. Functionally, protein L1 is also a translational repressor protein, it controls the translation of the L11 operon by binding to its mRNA. This chain is Large ribosomal subunit protein uL1, found in Symbiobacterium thermophilum (strain DSM 24528 / JCM 14929 / IAM 14863 / T).